The following is a 620-amino-acid chain: Two-component response regulator ORR27 (620 aa).

Positions 24 to 138 constitute a Response regulatory domain; that stretch reads HVLVVDDDAA…AIKFIWKHVL (115 aa). Asp-76 is modified (4-aspartylphosphate). Disordered regions lie at residues 171 to 197 and 215 to 257; these read PPAV…AELS and VWSS…LEAT. The segment at residues 261–321 is a DNA-binding region (myb-like GARP); it reads KKVRTRFTWT…HLQKYRSWLE (61 aa). A compositionally biased stretch (polar residues) spans 431–456; the sequence is SVSRDAHENGNSQARGSAMSNGTSGT. 3 disordered regions span residues 431–457, 501–523, and 596–620; these read SVSR…SGTR, SDQN…NSKT, and PPRG…SSGP. Polar residues predominate over residues 603–620; the sequence is EIASHENTNGKNGASSGP.

Belongs to the ARR family. Type-B subfamily. Two-component system major event consists of a His-to-Asp phosphorelay between a sensor histidine kinase (HK) and a response regulator (RR). In plants, the His-to-Asp phosphorelay involves an additional intermediate named Histidine-containing phosphotransfer protein (HPt). This multistep phosphorelay consists of a His-Asp-His-Asp sequential transfer of a phosphate group between first a His and an Asp of the HK protein, followed by the transfer to a conserved His of the HPt protein and finally the transfer to an Asp in the receiver domain of the RR protein.

The protein resides in the nucleus. Its function is as follows. Transcriptional activator that binds specific DNA sequence. Functions as a response regulator involved in His-to-Asp phosphorelay signal transduction system. Phosphorylation of the Asp residue in the receiver domain activates the ability of the protein to promote the transcription of target genes. May directly activate some type-A response regulators in response to cytokinins. The sequence is that of Two-component response regulator ORR27 from Oryza sativa subsp. japonica (Rice).